We begin with the raw amino-acid sequence, 251 residues long: Triosephosphate isomerase (251 aa).

9–11 (NWK) provides a ligand contact to substrate. His-95 functions as the Electrophile in the catalytic mechanism. The active-site Proton acceptor is Glu-167. Substrate contacts are provided by residues Gly-173, Ser-213, and 234–235 (GG).

The protein belongs to the triosephosphate isomerase family. As to quaternary structure, homodimer.

The protein resides in the cytoplasm. It carries out the reaction D-glyceraldehyde 3-phosphate = dihydroxyacetone phosphate. It functions in the pathway carbohydrate biosynthesis; gluconeogenesis. Its pathway is carbohydrate degradation; glycolysis; D-glyceraldehyde 3-phosphate from glycerone phosphate: step 1/1. Involved in the gluconeogenesis. Catalyzes stereospecifically the conversion of dihydroxyacetone phosphate (DHAP) to D-glyceraldehyde-3-phosphate (G3P). In Citrifermentans bemidjiense (strain ATCC BAA-1014 / DSM 16622 / JCM 12645 / Bem) (Geobacter bemidjiensis), this protein is Triosephosphate isomerase.